The chain runs to 123 residues: WAP four-disulfide core domain protein 5 (123 aa).

An N-terminal signal peptide occupies residues 1-24 (MRIQSLLLLGALLAVGSQLPAVFG). 2 WAP domains span residues 27–73 (KGEK…CIPR) and 74–121 (VSVK…RDPA). Disulfide bonds link Cys-34–Cys-62, Cys-41–Cys-66, Cys-49–Cys-61, Cys-55–Cys-70, Cys-81–Cys-109, Cys-88–Cys-113, Cys-96–Cys-108, and Cys-102–Cys-117.

Its subcellular location is the secreted. In terms of biological role, putative acid-stable proteinase inhibitor. The sequence is that of WAP four-disulfide core domain protein 5 (WFDC5) from Macaca mulatta (Rhesus macaque).